The primary structure comprises 191 residues: Ribonuclease HII (191 aa).

The region spanning 16–191 (INLIGIDEAG…KLHRKSFKLL (176 aa)) is the RNase H type-2 domain. A divalent metal cation is bound by residues Asp-22, Glu-23, and Asp-110.

Belongs to the RNase HII family. The cofactor is Mn(2+). Mg(2+) is required as a cofactor.

The protein resides in the cytoplasm. The enzyme catalyses Endonucleolytic cleavage to 5'-phosphomonoester.. In terms of biological role, endonuclease that specifically degrades the RNA of RNA-DNA hybrids. The chain is Ribonuclease HII from Campylobacter jejuni subsp. jejuni serotype O:6 (strain 81116 / NCTC 11828).